The following is a 203-amino-acid chain: Large ribosomal subunit protein uL13 (203 aa).

An N-acetylalanine modification is found at alanine 2. Arginine 59 is modified (citrulline). The residue at position 77 (serine 77) is a Phosphoserine. Arginine 140 carries the post-translational modification Citrulline. Lysine 191 is modified (N6-acetyllysine).

This sequence belongs to the universal ribosomal protein uL13 family. Component of the 60S ribosome. Component of the GAIT complex. Interacts with EIF4G1. In terms of processing, phosphorylation at Ser-77 upon interferon-gamma treatment in macrophages involves a DAPK1-DAPK3 kinase cascade and is causing release from the ribosome, association with the GAIT complex and subsequent involvement in transcript-selective translation inhibition. Post-translationally, citrullinated by PADI4.

It is found in the cytoplasm. Functionally, associated with ribosomes but is not required for canonical ribosome function and has extra-ribosomal functions. Component of the GAIT (gamma interferon-activated inhibitor of translation) complex which mediates interferon-gamma-induced transcript-selective translation inhibition in inflammation processes. Upon interferon-gamma activation and subsequent phosphorylation dissociates from the ribosome and assembles into the GAIT complex which binds to stem loop-containing GAIT elements in the 3'-UTR of diverse inflammatory mRNAs (such as ceruplasmin) and suppresses their translation. In the GAIT complex interacts with m7G cap-bound eIF4G at or near the eIF3-binding site and blocks the recruitment of the 43S ribosomal complex. Involved in methylation of rRNA. The chain is Large ribosomal subunit protein uL13 (Rpl13a) from Rattus norvegicus (Rat).